The sequence spans 314 residues: Lipoyl synthase (314 aa).

Residues Cys61, Cys66, Cys72, Cys87, Cys91, Cys94, and Ser301 each contribute to the [4Fe-4S] cluster site. Residues 73 to 290 enclose the Radical SAM core domain; it reads FGRGTATFMI…ERIATNLGFS (218 aa).

The protein belongs to the radical SAM superfamily. Lipoyl synthase family. It depends on [4Fe-4S] cluster as a cofactor.

The protein localises to the cytoplasm. The catalysed reaction is [[Fe-S] cluster scaffold protein carrying a second [4Fe-4S](2+) cluster] + N(6)-octanoyl-L-lysyl-[protein] + 2 oxidized [2Fe-2S]-[ferredoxin] + 2 S-adenosyl-L-methionine + 4 H(+) = [[Fe-S] cluster scaffold protein] + N(6)-[(R)-dihydrolipoyl]-L-lysyl-[protein] + 4 Fe(3+) + 2 hydrogen sulfide + 2 5'-deoxyadenosine + 2 L-methionine + 2 reduced [2Fe-2S]-[ferredoxin]. It participates in protein modification; protein lipoylation via endogenous pathway; protein N(6)-(lipoyl)lysine from octanoyl-[acyl-carrier-protein]: step 2/2. Functionally, catalyzes the radical-mediated insertion of two sulfur atoms into the C-6 and C-8 positions of the octanoyl moiety bound to the lipoyl domains of lipoate-dependent enzymes, thereby converting the octanoylated domains into lipoylated derivatives. This is Lipoyl synthase from Nitrosomonas eutropha (strain DSM 101675 / C91 / Nm57).